The chain runs to 299 residues: HTH-type transcriptional regulator CysL (299 aa).

The HTH lysR-type domain maps to 1-58 (MYYDVLKTFIAVVEEKNFTKAAEKLMISQPSVSLHIKNLEKEFQTALLNRSPKHFTTT). The segment at residues 18–37 (FTKAAEKLMISQPSVSLHIK) is a DNA-binding region (H-T-H motif).

The protein belongs to the LysR transcriptional regulatory family.

Functionally, transcriptional activator of the cysJI operon which is involved in sulfur assimilation. Also negatively regulates its own transcription. The sequence is that of HTH-type transcriptional regulator CysL (cysL) from Bacillus subtilis (strain 168).